Here is a 1513-residue protein sequence, read N- to C-terminus: DNA-directed RNA polymerase subunit beta'' (1513 aa).

Zn(2+) is bound by residues cysteine 220, cysteine 296, cysteine 303, and cysteine 306. A disordered region spans residues arginine 644–valine 769. A compositionally biased stretch (basic and acidic residues) spans asparagine 659–glutamate 679. Acidic residues predominate over residues glutamate 680 to glutamate 707. Residues asparagine 726–threonine 737 show a composition bias toward basic and acidic residues. The segment covering leucine 738–aspartate 767 has biased composition (acidic residues).

The protein belongs to the RNA polymerase beta' chain family. RpoC2 subfamily. As to quaternary structure, in plastids the minimal PEP RNA polymerase catalytic core is composed of four subunits: alpha, beta, beta', and beta''. When a (nuclear-encoded) sigma factor is associated with the core the holoenzyme is formed, which can initiate transcription. Zn(2+) serves as cofactor.

The protein localises to the plastid. It localises to the chloroplast. It catalyses the reaction RNA(n) + a ribonucleoside 5'-triphosphate = RNA(n+1) + diphosphate. In terms of biological role, DNA-dependent RNA polymerase catalyzes the transcription of DNA into RNA using the four ribonucleoside triphosphates as substrates. In Oryza nivara (Indian wild rice), this protein is DNA-directed RNA polymerase subunit beta''.